The primary structure comprises 325 residues: Hydroxylase/desaturase poxK (325 aa).

Residues 1 to 12 are compositionally biased toward low complexity; sequence MTATATPVPTVA. The disordered stretch occupies residues 1–25; that stretch reads MTATATPVPTVASHAQDITLPPPPK.

Belongs to the asaB hydroxylase/desaturase family.

It functions in the pathway secondary metabolite biosynthesis. Functionally, hydroxylase/desaturase; part of the gene cluster that mediates the biosynthesis of oxaleimides, cytotoxic compounds containing an unusual disubstituted succinimide moiety. The first step of the pathway is provided by the HR-PKS poxF that serves in a new mode of collaborative biosynthesis with the PKS-NRPS poxE, by providing the olefin containing amino acid substrate via the synthesis of an ACP-bound dec-4-enoate. The cytochrome P450 monooxygenase poxM-catalyzed oxidation at the alpha-position creates the enzyme-bound 2-hydroxydec-4-enoyl-ACP thioester, which may be prone to spontaneous hydrolysis to yield 2-hydroxydec-4-enoic acid due to increased electrophilicity of the carbonyl. 2-hydroxydec-4-enoic acid can then be further oxidized by poxM to yield the alpha-ketoacid 2-oxodec-4-enoicacid, which is reductively aminated by the aminotransferase poxL to yield (S,E)-2-aminodec-4-enoic acid. The Hybrid PKS-NRPS synthetase poxE then performs condensation between the octaketide product of its PKS modules and the amino group of (S,E)-2-aminodec-4-enoic acid which is activated and incorporated by the adenylation domain. The resulting aminoacyl product can be cyclized by the Diels-Alderase PoxQ and reductively released by the reductive (R) domain of poxE to yield an aldehyde intermediate. The released aldehyde is then substrate for a Knoevenagel condensation by the hydrolyase poxO followed by an oxidation at the 5-position of the pyrrolidone ring. The presence of the olefin from the amino acid building block allows for migration of the substituted allyl group to occur. This allylic transposition reaction takes place in a conjugate addition, semipinacol-like fashion to yield a succinimide intermediate. Iterative two-electron oxidations of the C7 methyl of the succinimide intermediate to the carboxylic acid can be catalyzed by one of two remaining cytochrome P450 monooxygenasess poxC or poxD to yield oxaleimide A. Subsequent oxidation yields the maleimide scaffold oxaleimide I. Both oxaleimide A and oxaleimide I can undergo oxidative modifications in the decalin ring to yield the series of products oxaleimides B to H. This chain is Hydroxylase/desaturase poxK, found in Penicillium oxalicum (strain 114-2 / CGMCC 5302) (Penicillium decumbens).